We begin with the raw amino-acid sequence, 118 residues long: Small ribosomal subunit protein uS13 (118 aa).

The tract at residues 94–118 (SLPLRGQRTKTNARTRKGPRKPIRK) is disordered.

Belongs to the universal ribosomal protein uS13 family. Part of the 30S ribosomal subunit. Forms a loose heterodimer with protein S19. Forms two bridges to the 50S subunit in the 70S ribosome.

Its function is as follows. Located at the top of the head of the 30S subunit, it contacts several helices of the 16S rRNA. In the 70S ribosome it contacts the 23S rRNA (bridge B1a) and protein L5 of the 50S subunit (bridge B1b), connecting the 2 subunits; these bridges are implicated in subunit movement. Contacts the tRNAs in the A and P-sites. The protein is Small ribosomal subunit protein uS13 of Shewanella frigidimarina (strain NCIMB 400).